A 214-amino-acid polypeptide reads, in one-letter code: Adenylate kinase (214 aa).

ATP is bound at residue 10–15 (GAGKGT). Positions 30 to 59 (STGDMLRAAIKAGTELGLNAKAVMDAGQLV) are NMP. AMP-binding positions include threonine 31, arginine 36, 57–59 (QLV), 85–88 (GFPR), and glutamine 92. Positions 122-159 (GRRVHSGSGRTYHVVFNPPKVEGKDDVTGEDLVIRADD) are LID. Residues arginine 123 and 132 to 133 (TY) each bind ATP. AMP-binding residues include arginine 156 and arginine 167. An ATP-binding site is contributed by glutamine 200.

It belongs to the adenylate kinase family. In terms of assembly, monomer.

Its subcellular location is the cytoplasm. The enzyme catalyses AMP + ATP = 2 ADP. The protein operates within purine metabolism; AMP biosynthesis via salvage pathway; AMP from ADP: step 1/1. In terms of biological role, catalyzes the reversible transfer of the terminal phosphate group between ATP and AMP. Plays an important role in cellular energy homeostasis and in adenine nucleotide metabolism. The sequence is that of Adenylate kinase from Aeromonas salmonicida (strain A449).